We begin with the raw amino-acid sequence, 465 residues long: Apolipoprotein N-acyltransferase (465 aa).

The next 6 helical transmembrane spans lie at 12–32 (AVLG…LSML), 49–69 (ALWG…LHPL), 80–100 (LPVA…LLLL), 122–142 (LLAL…LFWI), 161–181 (WLGS…LWQL), and 189–209 (CAWW…SLSP). Residues 221–448 (WQPAIPTREK…DAVAAAELQR (228 aa)) form the CN hydrolase domain. Glu-262 functions as the Proton acceptor in the catalytic mechanism. Lys-312 is a catalytic residue. Cys-360 acts as the Nucleophile in catalysis.

This sequence belongs to the CN hydrolase family. Apolipoprotein N-acyltransferase subfamily.

Its subcellular location is the cell inner membrane. The enzyme catalyses N-terminal S-1,2-diacyl-sn-glyceryl-L-cysteinyl-[lipoprotein] + a glycerophospholipid = N-acyl-S-1,2-diacyl-sn-glyceryl-L-cysteinyl-[lipoprotein] + a 2-acyl-sn-glycero-3-phospholipid + H(+). It functions in the pathway protein modification; lipoprotein biosynthesis (N-acyl transfer). In terms of biological role, catalyzes the phospholipid dependent N-acylation of the N-terminal cysteine of apolipoprotein, the last step in lipoprotein maturation. The chain is Apolipoprotein N-acyltransferase from Parasynechococcus marenigrum (strain WH8102).